Here is a 1643-residue protein sequence, read N- to C-terminus: DNA-directed RNA polymerase subunit beta' (1643 aa).

Residues Cys64, Cys66, Cys79, and Cys82 each coordinate Zn(2+). Asp684, Asp686, and Asp688 together coordinate Mg(2+). 4 residues coordinate Zn(2+): Cys1046, Cys1239, Cys1246, and Cys1249.

The protein belongs to the RNA polymerase beta' chain family. In terms of assembly, the RNAP catalytic core consists of 2 alpha, 1 beta, 1 beta' and 1 omega subunit. When a sigma factor is associated with the core the holoenzyme is formed, which can initiate transcription. Mg(2+) is required as a cofactor. Requires Zn(2+) as cofactor.

The catalysed reaction is RNA(n) + a ribonucleoside 5'-triphosphate = RNA(n+1) + diphosphate. DNA-dependent RNA polymerase catalyzes the transcription of DNA into RNA using the four ribonucleoside triphosphates as substrates. In Petrotoga mobilis (strain DSM 10674 / SJ95), this protein is DNA-directed RNA polymerase subunit beta'.